A 572-amino-acid polypeptide reads, in one-letter code: MGQQWPAGEIARLILDGFDDYREHFRQITDGARVRFEQAQWQEAQRASAARINLYEEKVAQTRERLLEGFDESLLEVGQWPLVKSAYIALIDLRFDDELAETWFNSIFCSLFSHDLISDGCMFIHTTRPSLRNQPSAAQTRNYRPAGELHLALQAIFDDYRFDVSYEDLPRDLQRLEGQLRASLPDWICKDPQQCIELFSSVLYRNKGAYLVGRIYTPDEQWPLVIPLLHREGLGIQVDAAITDEAEVSIIFSFTRSYFMVDVAIPAEFVGFLKRILPGKHIAELYTSIGFYKHGKSEFYRALIGHLASTDDRFIMAPGVRGMVMSVFTLPGFNTVFKIIKDRFAHAKTVDRKTVIEKYRLVKSVDRVGRMADTQEFSDFRFPKAKFEPECLAELLEVAPSTVVVEGDTVLVRHCWTERRMTPLNLYLESASEAQVREALDDYGLAIKQLAAANIFPGDMLLKNFGVTRHGRVVFYDYDEICFLTEVNFRRIPPPRFPEDEMSSEPWYSVGPMDVFPEEFPPFLFADIKQRRLFSQLHGNLYDADYWKQLQDAIRAGKVIDVFPYRRKSPVE.

ATP contacts are provided by residues 317 to 323 (APGVRGM) and Lys338. Asp373 is a catalytic residue.

It belongs to the AceK family.

The protein resides in the cytoplasm. It carries out the reaction L-seryl-[isocitrate dehydrogenase] + ATP = O-phospho-L-seryl-[isocitrate dehydrogenase] + ADP + H(+). Its function is as follows. Bifunctional enzyme which can phosphorylate or dephosphorylate isocitrate dehydrogenase (IDH) on a specific serine residue. This is a regulatory mechanism which enables bacteria to bypass the Krebs cycle via the glyoxylate shunt in response to the source of carbon. When bacteria are grown on glucose, IDH is fully active and unphosphorylated, but when grown on acetate or ethanol, the activity of IDH declines drastically concomitant with its phosphorylation. The chain is Isocitrate dehydrogenase kinase/phosphatase from Ectopseudomonas mendocina (strain ymp) (Pseudomonas mendocina).